The sequence spans 195 residues: Probable molybdenum cofactor guanylyltransferase (195 aa).

Residues 9 to 11 (LAG), lysine 21, aspartate 69, and aspartate 100 contribute to the GTP site. A Mg(2+)-binding site is contributed by aspartate 100.

It belongs to the MobA family. Requires Mg(2+) as cofactor.

It is found in the cytoplasm. It carries out the reaction Mo-molybdopterin + GTP + H(+) = Mo-molybdopterin guanine dinucleotide + diphosphate. Its function is as follows. Transfers a GMP moiety from GTP to Mo-molybdopterin (Mo-MPT) cofactor (Moco or molybdenum cofactor) to form Mo-molybdopterin guanine dinucleotide (Mo-MGD) cofactor. This Geobacillus sp. (strain WCH70) protein is Probable molybdenum cofactor guanylyltransferase.